The following is a 138-amino-acid chain: MRTLWILAVLLLGVEGNLVQFELLIMKVAKRSGLLSYSAYGCYCGWGGHGRPQDATDRCCFVHDCCYGKVTDCNPKTASYTYSEENGEIVCGGDDPCKKQVCECDRVAAICFRDNIPSYDNKYIQFPAKNCQEKPEPC.

The N-terminal stretch at Met-1 to Gly-16 is a signal peptide. Intrachain disulfides connect Cys-42–Cys-131, Cys-44–Cys-60, Cys-59–Cys-111, Cys-65–Cys-138, Cys-66–Cys-104, Cys-73–Cys-97, and Cys-91–Cys-102. Ca(2+) is bound by residues Tyr-43, Gly-45, and Gly-47. The active site involves His-63. Asp-64 provides a ligand contact to Ca(2+). The active site involves Asp-105.

Ca(2+) is required as a cofactor. Expressed by the venom gland.

It localises to the secreted. It catalyses the reaction a 1,2-diacyl-sn-glycero-3-phosphocholine + H2O = a 1-acyl-sn-glycero-3-phosphocholine + a fatty acid + H(+). Its function is as follows. Snake venom phospholipase A2 (PLA2) that significantly inhibits ADP-induced platelet aggregation in platelet-rich plasma of human, rabbit and guinea pig. PLA2 catalyzes the calcium-dependent hydrolysis of the 2-acyl groups in 3-sn-phosphoglycerides. The chain is Acidic phospholipase A2 Cvv-E6e from Crotalus viridis viridis (Prairie rattlesnake).